We begin with the raw amino-acid sequence, 630 residues long: MENSTTTISREELEELQEAFNKIDIDNSGYVSDYELQDLFKEASLPLPGYKVREIVEKILAVADNNKDSRISFEEFVSLMQELKSKDISKTFRKIINKREGITAIGGTSSISSEGTQHSYSEEEKVAFVNWINKALENDPDCKHLIPMNPNDDSLFKSLADGILLCKMINLSEPDTIDERAINKKKLTPFTISENLNLALNSASAIGCTVVNIGAQDLTEGKPHLVLGLLWQIIKVGLFADIEISRNEALIALLKEGEDLEELMRLSPEELLLQWVNYHLTNAGWPTISNFSHDIKDSRAYFHLLNQIAPKGDRDDGPAIAIDLTGFSEKNDLKRAEFMLQEADKLGCRQFVTPADVVSGNPKLNLAFVANLFNTYPGLHKPDNNDIDVNLLEGESKEERTFRNWMNSLGVNPYINHLYSDLADALVIFQLYEMIRVPVDWSHVNKPPYPALGGNMKKIENCNYAVELGKNKAKFSLVGIAGQDLNEGNSTLTLALVWQLMRRYTLNVLSDLGEGEKVNDAIIIEWVNQTLKSANKNTFISSFKDKSISTSLPVLDLIDAIAPNAVRQEMIKREDLSDEDKLNNAKYAISVARKIGARIYALPDDLVEVKPKMVMTVFACLMGKGLNKIK.

Met1 carries the N-acetylmethionine modification. 2 EF-hand domains span residues 11–46 and 51–86; these read EELE…ASLP and KVRE…LKSK. Asp24, Asp26, Ser28, Tyr30, Glu35, Asp64, Asn66, Asp68, Arg70, and Glu75 together coordinate Ca(2+). Actin-binding stretches follow at residues 108–381 and 382–626; these read TSSI…GLHK and PDNN…GKGL. Calponin-homology (CH) domains lie at 122 to 238, 266 to 377, 396 to 505, and 517 to 626; these read EEEK…KVGL, LSPE…NTYP, SKEE…RRYT, and KVND…GKGL.

Monomer. In terms of processing, phosphorylated.

Its subcellular location is the cytoplasm. It localises to the cell projection. It is found in the stereocilium. Actin-bundling protein. In the inner ear, it is required for stereocilia formation. Mediates liquid packing of actin filaments that is necessary for stereocilia to grow to their proper dimensions. This chain is Plastin-1 (PLS1), found in Bos taurus (Bovine).